Here is a 279-residue protein sequence, read N- to C-terminus: Thymidylate synthase (279 aa).

Residue 133 to 134 (RR) coordinates dUMP. Cysteine 154 functions as the Nucleophile in the catalytic mechanism. DUMP-binding positions include 178–181 (RSND), asparagine 189, and 219–221 (HIY). Aspartate 181 serves as a coordination point for (6R)-5,10-methylene-5,6,7,8-tetrahydrofolate. Residue alanine 278 coordinates (6R)-5,10-methylene-5,6,7,8-tetrahydrofolate.

It belongs to the thymidylate synthase family. Bacterial-type ThyA subfamily. In terms of assembly, homodimer.

Its subcellular location is the cytoplasm. The enzyme catalyses dUMP + (6R)-5,10-methylene-5,6,7,8-tetrahydrofolate = 7,8-dihydrofolate + dTMP. It functions in the pathway pyrimidine metabolism; dTTP biosynthesis. Catalyzes the reductive methylation of 2'-deoxyuridine-5'-monophosphate (dUMP) to 2'-deoxythymidine-5'-monophosphate (dTMP) while utilizing 5,10-methylenetetrahydrofolate (mTHF) as the methyl donor and reductant in the reaction, yielding dihydrofolate (DHF) as a by-product. This enzymatic reaction provides an intracellular de novo source of dTMP, an essential precursor for DNA biosynthesis. The chain is Thymidylate synthase from Streptococcus gordonii (strain Challis / ATCC 35105 / BCRC 15272 / CH1 / DL1 / V288).